We begin with the raw amino-acid sequence, 196 residues long: Neurensin-1 (196 aa).

Transmembrane regions (helical) follow at residues 67–87 (LISG…GFLV) and 121–141 (AVLF…SVFA).

This sequence belongs to the VMP family. Expressed predominantly in brain. Also weakly expressed in lung and spleen. In brain, expressed strongly in nerve fibers of the cerebral cortex, anterior cerebral nuclei, hypothalamus, amygdaloid complex, brain stem of the metaencephalon and medulla oblongata, and moderately expressed in soma of neurons of the dentate gyrus of the hippocampus and Purkinje cells of the cerebellum.

It is found in the membrane. The protein resides in the cell projection. The protein localises to the neuron projection. Functionally, may play an important role in neural organelle transport, and in transduction of nerve signals or in nerve growth. May play a role in neurite extension. This Mus musculus (Mouse) protein is Neurensin-1.